Reading from the N-terminus, the 110-residue chain is Endoribonuclease SymE (110 aa).

The SpoVT-AbrB domain maps to 29 to 74 (SRYPDYTRIPALTMKGQWLEAAGFATGTEVDVRVMNGCIVLTAQQP).

The protein belongs to the SymE family.

Its subcellular location is the cytoplasm. In terms of biological role, involved in the degradation and recycling of damaged RNA. It is itself a target for degradation by the ATP-dependent protease Lon. The protein is Endoribonuclease SymE of Salmonella heidelberg (strain SL476).